The following is a 167-amino-acid chain: Secretion monitor (167 aa).

Residues 1–36 (MIGILNRWRQFGRRYFWPHLLLGMVAASFGLPQASA) form the signal peptide.

The protein belongs to the SecM family.

The protein localises to the cytoplasm. The protein resides in the cytosol. It localises to the periplasm. In terms of biological role, regulates secA expression by translational coupling of the secM secA operon. Translational pausing at a specific Pro residue 5 residues before the end of the protein may allow disruption of a mRNA repressor helix that normally suppresses secA translation initiation. The sequence is that of Secretion monitor from Erwinia tasmaniensis (strain DSM 17950 / CFBP 7177 / CIP 109463 / NCPPB 4357 / Et1/99).